A 137-amino-acid chain; its full sequence is 6,7-dimethyl-8-ribityllumazine synthase (137 aa).

Residues Phe11, Ser43–Asp45, and Cys67–Ile69 contribute to the 5-amino-6-(D-ribitylamino)uracil site. Asp72–Thr73 contacts (2S)-2-hydroxy-3-oxobutyl phosphate. The active-site Proton donor is the His75. Leu100 lines the 5-amino-6-(D-ribitylamino)uracil pocket. Arg115 contributes to the (2S)-2-hydroxy-3-oxobutyl phosphate binding site.

It belongs to the DMRL synthase family. In terms of assembly, forms an icosahedral capsid composed of 60 subunits, arranged as a dodecamer of pentamers.

The catalysed reaction is (2S)-2-hydroxy-3-oxobutyl phosphate + 5-amino-6-(D-ribitylamino)uracil = 6,7-dimethyl-8-(1-D-ribityl)lumazine + phosphate + 2 H2O + H(+). It participates in cofactor biosynthesis; riboflavin biosynthesis; riboflavin from 2-hydroxy-3-oxobutyl phosphate and 5-amino-6-(D-ribitylamino)uracil: step 1/2. In terms of biological role, catalyzes the formation of 6,7-dimethyl-8-ribityllumazine by condensation of 5-amino-6-(D-ribitylamino)uracil with 3,4-dihydroxy-2-butanone 4-phosphate. This is the penultimate step in the biosynthesis of riboflavin. The protein is 6,7-dimethyl-8-ribityllumazine synthase of Methanococcus maripaludis (strain C5 / ATCC BAA-1333).